The primary structure comprises 727 residues: Pentatricopeptide repeat-containing protein At4g20740 (727 aa).

Residues 1–84 form a disordered region; it reads MKSPKPPNLS…PSPPSHSTVI (84 aa). A compositionally biased stretch (polar residues) spans 38-56; it reads SNRQSIPRVSPQPQSNSLA. Residues 59 to 70 are compositionally biased toward basic and acidic residues; that stretch reads TPFDLRKWDPET. 14 PPR repeats span residues 157–191, 192–226, 227–261, 262–296, 297–331, 332–366, 367–401, 402–436, 437–471, 506–540, 541–575, 576–606, 612–646, and 647–681; these read DFAA…GRPP, SEKQ…GFKP, RVFL…GLVE, ESTT…LCKP, DVFA…EIKP, DVMA…QILI, DREI…GYIA, DIGI…ELEP, DFET…GYPV, SVSV…GFEP, DSSS…SCVP, SIAA…CLGN, MEFK…GVFI, and NEVI…KVMT.

The protein belongs to the PPR family. P subfamily.

This Arabidopsis thaliana (Mouse-ear cress) protein is Pentatricopeptide repeat-containing protein At4g20740.